We begin with the raw amino-acid sequence, 429 residues long: Enolase (429 aa).

Gln163 contacts (2R)-2-phosphoglycerate. Glu205 functions as the Proton donor in the catalytic mechanism. The Mg(2+) site is built by Asp242, Glu287, and Asp314. (2R)-2-phosphoglycerate-binding residues include Lys339, Arg368, Ser369, and Lys390. Lys339 (proton acceptor) is an active-site residue.

This sequence belongs to the enolase family. Mg(2+) is required as a cofactor.

It is found in the cytoplasm. It localises to the secreted. Its subcellular location is the cell surface. It catalyses the reaction (2R)-2-phosphoglycerate = phosphoenolpyruvate + H2O. Its pathway is carbohydrate degradation; glycolysis; pyruvate from D-glyceraldehyde 3-phosphate: step 4/5. In terms of biological role, catalyzes the reversible conversion of 2-phosphoglycerate (2-PG) into phosphoenolpyruvate (PEP). It is essential for the degradation of carbohydrates via glycolysis. The protein is Enolase of Anaeromyxobacter dehalogenans (strain 2CP-C).